Consider the following 242-residue polypeptide: Ribosomal RNA small subunit methyltransferase G (242 aa).

S-adenosyl-L-methionine contacts are provided by residues Gly78, Leu83, 130-131 (AE), and Arg151.

It belongs to the methyltransferase superfamily. RNA methyltransferase RsmG family.

The protein resides in the cytoplasm. In terms of biological role, specifically methylates the N7 position of guanine in position 518 of 16S rRNA. The protein is Ribosomal RNA small subunit methyltransferase G of Salinispora arenicola (strain CNS-205).